Here is a 369-residue protein sequence, read N- to C-terminus: Probable dual-specificity RNA methyltransferase RlmN (369 aa).

Glu-108 acts as the Proton acceptor in catalysis. Positions 114 to 351 (YPDRATLCIS…IAQGVSCTVR (238 aa)) constitute a Radical SAM core domain. Cys-121 and Cys-362 are disulfide-bonded. 3 residues coordinate [4Fe-4S] cluster: Cys-128, Cys-132, and Cys-135. Residues 183 to 184 (GE), Ser-217, 240 to 242 (SLH), and Asn-319 contribute to the S-adenosyl-L-methionine site. Residue Cys-362 is the S-methylcysteine intermediate of the active site.

The protein belongs to the radical SAM superfamily. RlmN family. [4Fe-4S] cluster is required as a cofactor.

Its subcellular location is the cytoplasm. The catalysed reaction is adenosine(2503) in 23S rRNA + 2 reduced [2Fe-2S]-[ferredoxin] + 2 S-adenosyl-L-methionine = 2-methyladenosine(2503) in 23S rRNA + 5'-deoxyadenosine + L-methionine + 2 oxidized [2Fe-2S]-[ferredoxin] + S-adenosyl-L-homocysteine. The enzyme catalyses adenosine(37) in tRNA + 2 reduced [2Fe-2S]-[ferredoxin] + 2 S-adenosyl-L-methionine = 2-methyladenosine(37) in tRNA + 5'-deoxyadenosine + L-methionine + 2 oxidized [2Fe-2S]-[ferredoxin] + S-adenosyl-L-homocysteine. Functionally, specifically methylates position 2 of adenine 2503 in 23S rRNA and position 2 of adenine 37 in tRNAs. The chain is Probable dual-specificity RNA methyltransferase RlmN from Rhodococcus erythropolis (strain PR4 / NBRC 100887).